Reading from the N-terminus, the 488-residue chain is Glutamyl-tRNA(Gln) amidotransferase subunit A (488 aa).

Active-site charge relay system residues include Lys76 and Ser152. The active-site Acyl-ester intermediate is the Ser176.

This sequence belongs to the amidase family. GatA subfamily. As to quaternary structure, heterotrimer of A, B and C subunits.

The catalysed reaction is L-glutamyl-tRNA(Gln) + L-glutamine + ATP + H2O = L-glutaminyl-tRNA(Gln) + L-glutamate + ADP + phosphate + H(+). Allows the formation of correctly charged Gln-tRNA(Gln) through the transamidation of misacylated Glu-tRNA(Gln) in organisms which lack glutaminyl-tRNA synthetase. The reaction takes place in the presence of glutamine and ATP through an activated gamma-phospho-Glu-tRNA(Gln). This Oceanobacillus iheyensis (strain DSM 14371 / CIP 107618 / JCM 11309 / KCTC 3954 / HTE831) protein is Glutamyl-tRNA(Gln) amidotransferase subunit A.